The primary structure comprises 199 residues: Transgelin-3 (199 aa).

The 113-residue stretch at Ala24 to Ala136 folds into the Calponin-homology (CH) domain. Ser163 carries the phosphoserine modification. A Calponin-like repeat occupies Ile174–Met199. Residues Leu176–Gly188 are compositionally biased toward polar residues. Residues Leu176–Met199 are disordered.

Belongs to the calponin family. In terms of tissue distribution, widely expressed in the brain. Expression is increased in the superior frontal cortex of alcoholics, but not in the motor cortex or cerebellum.

The polypeptide is Transgelin-3 (TAGLN3) (Homo sapiens (Human)).